A 526-amino-acid polypeptide reads, in one-letter code: Anthranilate synthase component 1 (526 aa).

Residues serine 40 and 304–306 (PYM) each bind L-tryptophan. 341–342 (GT) lines the chorismate pocket. Glutamate 374 contacts Mg(2+). Chorismate-binding positions include tyrosine 461, arginine 481, 495–497 (GAG), and glycine 497. Glutamate 510 lines the Mg(2+) pocket.

Belongs to the anthranilate synthase component I family. In terms of assembly, heterotetramer consisting of two non-identical subunits: a beta subunit (TrpG) and a large alpha subunit (TrpE). Mg(2+) serves as cofactor.

The enzyme catalyses chorismate + L-glutamine = anthranilate + pyruvate + L-glutamate + H(+). It functions in the pathway amino-acid biosynthesis; L-tryptophan biosynthesis; L-tryptophan from chorismate: step 1/5. Feedback inhibited by tryptophan. Functionally, part of a heterotetrameric complex that catalyzes the two-step biosynthesis of anthranilate, an intermediate in the biosynthesis of L-tryptophan. In the first step, the glutamine-binding beta subunit (TrpG) of anthranilate synthase (AS) provides the glutamine amidotransferase activity which generates ammonia as a substrate that, along with chorismate, is used in the second step, catalyzed by the large alpha subunit of AS (TrpE) to produce anthranilate. In the absence of TrpG, TrpE can synthesize anthranilate directly from chorismate and high concentrations of ammonia. The chain is Anthranilate synthase component 1 (trpE) from Buchnera aphidicola subsp. Tetraneura caerulescens.